The primary structure comprises 205 residues: Holliday junction branch migration complex subunit RuvA (205 aa).

The segment at 1–64 (MIGRLRGTLA…EDAHLLYGFA (64 aa)) is domain I. The segment at 65 to 143 (EKRERELFRE…AWETSPAMFT (79 aa)) is domain II. The interval 144–154 (LVSDGPLPVAS) is flexible linker. The tract at residues 154–205 (SESSAEADAVSALVSLGYKPQEASKAIAAIKDKAGLSSEELIRRSLKGMISK) is domain III.

Belongs to the RuvA family. In terms of assembly, homotetramer. Forms an RuvA(8)-RuvB(12)-Holliday junction (HJ) complex. HJ DNA is sandwiched between 2 RuvA tetramers; dsDNA enters through RuvA and exits via RuvB. An RuvB hexamer assembles on each DNA strand where it exits the tetramer. Each RuvB hexamer is contacted by two RuvA subunits (via domain III) on 2 adjacent RuvB subunits; this complex drives branch migration. In the full resolvosome a probable DNA-RuvA(4)-RuvB(12)-RuvC(2) complex forms which resolves the HJ.

The protein localises to the cytoplasm. Its function is as follows. The RuvA-RuvB-RuvC complex processes Holliday junction (HJ) DNA during genetic recombination and DNA repair, while the RuvA-RuvB complex plays an important role in the rescue of blocked DNA replication forks via replication fork reversal (RFR). RuvA specifically binds to HJ cruciform DNA, conferring on it an open structure. The RuvB hexamer acts as an ATP-dependent pump, pulling dsDNA into and through the RuvAB complex. HJ branch migration allows RuvC to scan DNA until it finds its consensus sequence, where it cleaves and resolves the cruciform DNA. This Pseudomonas putida (strain ATCC 47054 / DSM 6125 / CFBP 8728 / NCIMB 11950 / KT2440) protein is Holliday junction branch migration complex subunit RuvA.